The primary structure comprises 200 residues: Cysteine dioxygenase type 1 (200 aa).

Fe cation is bound by residues His-86, His-88, and His-140. The segment at residues 93–157 (CFLKLLQGNL…TEPAVSLHLY (65 aa)) is a cross-link (3'-(S-cysteinyl)-tyrosine (Cys-Tyr)).

The protein belongs to the cysteine dioxygenase family. As to quaternary structure, monomer. Requires Fe(2+) as cofactor. The cofactor is Ni(2+). It depends on Zn(2+) as a cofactor. Post-translationally, the thioether cross-link between Cys-93 and Tyr-157 plays a structural role through stabilizing the Fe(2+) ion, and prevents the production of highly damaging free hydroxyl radicals by holding the oxygen radical via hydroxyl hydrogen. In terms of tissue distribution, highest expression in liver. Also expressed in kidney, lung, brain and small intestine.

The enzyme catalyses L-cysteine + O2 = 3-sulfino-L-alanine + H(+). It participates in organosulfur biosynthesis; taurine biosynthesis; hypotaurine from L-cysteine: step 1/2. Catalyzes the oxidation of cysteine to cysteine sulfinic acid with addition of molecular dioxygen. This chain is Cysteine dioxygenase type 1 (Cdo1), found in Mus musculus (Mouse).